The sequence spans 858 residues: Volume-regulated anion channel subunit LRRC8D (858 aa).

Over Met-1–Pro-22 the chain is Cytoplasmic. Residues Trp-23 to Thr-48 form a helical membrane-spanning segment. Over Lys-49–Lys-163 the chain is Extracellular. Residues Cys-54 and Cys-354 are joined by a disulfide bond. The helical transmembrane segment at Tyr-164–Phe-182 threads the bilayer. At Trp-183–Tyr-308 the chain is on the cytoplasmic side. Residues Ser-221 to Thr-251 are disordered. A compositionally biased stretch (polar residues) spans Arg-227 to Thr-251. Phosphoserine occurs at positions 241, 242, and 246. The chain crosses the membrane as a helical span at residues Val-309–Asn-328. The Extracellular portion of the chain corresponds to Phe-329–Tyr-360. Residues Met-361 to Trp-386 traverse the membrane as a helical segment. The Cytoplasmic portion of the chain corresponds to Leu-387 to Ile-858. LRR repeat units lie at residues Asn-514–Phe-534, His-538–Leu-559, Asn-561–Glu-582, His-589–Val-609, His-612–Lys-632, Asn-636–Leu-657, Asn-659–Gln-680, Arg-684–Val-705, Asn-707–Leu-728, Lys-730–Leu-751, Asn-753–Cys-774, Lys-776–Leu-797, and Gln-799–Cys-820.

The protein belongs to the LRRC8 family. In terms of assembly, heterohexamer; oligomerizes with other LRRC8 proteins (LRRC8A, LRRC8B, LRRC8C and/or LRRC8E) to form a heterohexamer. In vivo, the subunit composition may depend primarily on expression levels, and heterooligomeric channels containing various proportions of the different LRRC8 proteins may coexist.

It localises to the cell membrane. It is found in the endoplasmic reticulum membrane. The enzyme catalyses chloride(in) = chloride(out). It carries out the reaction iodide(out) = iodide(in). The catalysed reaction is taurine(out) = taurine(in). In terms of biological role, non-essential component of the volume-regulated anion channel (VRAC, also named VSOAC channel), an anion channel required to maintain a constant cell volume in response to extracellular or intracellular osmotic changes. The VRAC channel conducts iodide better than chloride and can also conduct organic osmolytes like taurine. Plays a redundant role in the efflux of amino acids, such as aspartate, in response to osmotic stress. LRRC8A and LRRC8D are required for the uptake of the drug cisplatin. Channel activity requires LRRC8A plus at least one other family member (LRRC8B, LRRC8C, LRRC8D or LRRC8E); channel characteristics depend on the precise subunit composition. Also acts as a regulator of glucose-sensing in pancreatic beta cells: VRAC currents, generated in response to hypotonicity- or glucose-induced beta cell swelling, depolarize cells, thereby causing electrical excitation, leading to increase glucose sensitivity and insulin secretion. VRAC channels containing LRRC8D inhibit transport of immunoreactive cyclic dinucleotide GMP-AMP (2'-3'-cGAMP), an immune messenger produced in response to DNA virus in the cytosol. Mediates the import of the antibiotic blasticidin-S into the cell. In Homo sapiens (Human), this protein is Volume-regulated anion channel subunit LRRC8D.